Consider the following 491-residue polypeptide: MIQPDEPQDFPVKLIDKEQLTPTQIVEQLDKYIIGQKDAKRSVAIALRNRLRRQNVSEELRDEIMPNNIIMIGPTGVGKTEIARRLAKLAKAPFVKVEASKFTEVGYVGRDVESMIRDLVEQAVAMVRSEKTEEVREKAALLVEERLLDILLPPVSGLEESEHVGDEEEAVVVEGDAEVVVEKNLEREINRKSRQKMRERLRDGRMEDRQIELEVSSDGQGGMMQIFGPLGQMEEIGNIMQDLMSGMPKKRKKRRMTIAEARKYLEQEEVQKLIDMDAVVKEALRKVEDSGIVFIDEIDKIAAPTTGAGGKGPDVSREGVQRDLLPIVEGTAVSTKYGVVKTDHVLFIASGAFHVARPSDLIPELQGRFPIRVELKSLTEEDFFLILTQPRNALIKQYRAMLKTEQIDLEFTEEAIREIARTAAKVNETVENIGARRLHTILTNLLEELMFGIPEMVMDGTIDRNIVIDDNQVREKLGKLVADRDLSQYIL.

ATP-binding positions include Ile34, 76–81 (GVGKTE), Asp296, Glu364, and Arg436.

Belongs to the ClpX chaperone family. HslU subfamily. In terms of assembly, a double ring-shaped homohexamer of HslV is capped on each side by a ring-shaped HslU homohexamer. The assembly of the HslU/HslV complex is dependent on binding of ATP.

The protein localises to the cytoplasm. In terms of biological role, ATPase subunit of a proteasome-like degradation complex; this subunit has chaperone activity. The binding of ATP and its subsequent hydrolysis by HslU are essential for unfolding of protein substrates subsequently hydrolyzed by HslV. HslU recognizes the N-terminal part of its protein substrates and unfolds these before they are guided to HslV for hydrolysis. The polypeptide is ATP-dependent protease ATPase subunit HslU (Chlorobaculum tepidum (strain ATCC 49652 / DSM 12025 / NBRC 103806 / TLS) (Chlorobium tepidum)).